The primary structure comprises 272 residues: sn-1 stearoyl-lipid 9-desaturase (272 aa).

The next 2 helical transmembrane spans lie at 11 to 31 and 39 to 59; these read INWVNTLFFLGLHIGALFAFI and AVGVALLLYWITGGLGITLGF. A Histidine box-1 motif is present at residues 60-65; sequence HRLVTH. Positions 97 to 101 match the Histidine box-2 motif; the sequence is HRIHH. Residues 160–180 form a helical membrane-spanning segment; the sequence is IALGLLLLYLGGWSFVVWGVF. The Histidine box-3 motif lies at 230-234; it reads HHAFQ.

Belongs to the fatty acid desaturase type 2 family. The cofactor is Fe(2+).

Its subcellular location is the membrane. It catalyses the reaction a 1-octadecanoyl 2-acyl-glycerolipid + 2 reduced [2Fe-2S]-[ferredoxin] + O2 + 2 H(+) = a 1-[(9Z)-octadecenoyl]-2-acyl-glycerolipid + 2 oxidized [2Fe-2S]-[ferredoxin] + 2 H2O. It participates in lipid metabolism; polyunsaturated fatty acid biosynthesis. Desaturase involved in fatty acid biosynthesis. Introduces a double bond at carbon 9 of stearoyl groups (18:0) attached to the sn-1 position of the glycerol moiety of membrane glycerolipids. Does not desaturate palmitic acid (16:0), palmitoleic acid (16:1) and cis-vaccenic acid (18:1). The protein is sn-1 stearoyl-lipid 9-desaturase of Anabaena variabilis.